A 245-amino-acid chain; its full sequence is Eukaryotic translation initiation factor 6 (245 aa).

The residue at position 113 (Tyr113) is a Phosphotyrosine. The residue at position 165 (Thr165) is a Phosphothreonine. Ser166 is subject to Phosphoserine. Ser174 and Ser175 each carry phosphoserine; by CK1. At Ser235 the chain carries Phosphoserine; by PKC. 2 positions are modified to phosphoserine: Ser239 and Ser243.

The protein belongs to the eIF-6 family. In terms of assembly, monomer. Associates with the 60S ribosomal subunit. Interacts with RACK1. Interacts with DICER1, AGO2, TARBP2, MOV10 and RPL7A; they form a large RNA-induced silencing complex (RISC). Post-translationally, phosphorylation at Ser-174 and Ser-175 by CSNK1D/CK1 promotes nuclear export. In terms of processing, ufmylated by UFL1.

The protein resides in the cytoplasm. The protein localises to the nucleus. Its subcellular location is the nucleolus. Functionally, binds to the 60S ribosomal subunit and prevents its association with the 40S ribosomal subunit to form the 80S initiation complex in the cytoplasm. Behaves as a stimulatory translation initiation factor downstream insulin/growth factors. Is also involved in ribosome biogenesis. Associates with pre-60S subunits in the nucleus and is involved in its nuclear export. Cytoplasmic release of TIF6 from 60S subunits and nuclear relocalization is promoted by a RACK1 (RACK1)-dependent protein kinase C activity. In tissues responsive to insulin, controls fatty acid synthesis and glycolysis by exerting translational control of adipogenic transcription factors such as CEBPB, CEBPD and ATF4 that have G/C rich or uORF in their 5'UTR. Required for ROS-dependent megakaryocyte maturation and platelets formation, controls the expression of mitochondrial respiratory chain genes involved in reactive oxygen species (ROS) synthesis. Involved in miRNA-mediated gene silencing by the RNA-induced silencing complex (RISC). Required for both miRNA-mediated translational repression and miRNA-mediated cleavage of complementary mRNAs by RISC. Modulates cell cycle progression and global translation of pre-B cells, its activation seems to be rate-limiting in tumorigenesis and tumor growth. The sequence is that of Eukaryotic translation initiation factor 6 (Eif6) from Rattus norvegicus (Rat).